Reading from the N-terminus, the 397-residue chain is Elongation factor Tu (397 aa).

The region spanning 10-207 (KPHVNIGTIG…ACDSYIPEPQ (198 aa)) is the tr-type G domain. The interval 19–26 (GHIDHGKT) is G1. 19-26 (GHIDHGKT) is a binding site for GTP. Residue Thr26 coordinates Mg(2+). Positions 60 to 64 (GITIA) are G2. Residues 81 to 84 (DCPG) form a G3 region. GTP contacts are provided by residues 81 to 85 (DCPGH) and 136 to 139 (NKCD). A G4 region spans residues 136-139 (NKCD). The segment at 174-176 (SAL) is G5.

It belongs to the TRAFAC class translation factor GTPase superfamily. Classic translation factor GTPase family. EF-Tu/EF-1A subfamily. As to quaternary structure, monomer.

It localises to the cytoplasm. It catalyses the reaction GTP + H2O = GDP + phosphate + H(+). Functionally, GTP hydrolase that promotes the GTP-dependent binding of aminoacyl-tRNA to the A-site of ribosomes during protein biosynthesis. In Nitratidesulfovibrio vulgaris (strain DSM 19637 / Miyazaki F) (Desulfovibrio vulgaris), this protein is Elongation factor Tu.